The sequence spans 528 residues: Peptide chain release factor 3 (528 aa).

One can recognise a tr-type G domain in the interval 10-278; the sequence is DRRRTFGIIS…AFVEQAPVPR (269 aa). GTP is bound by residues 19-26, 87-91, and 141-144; these read SHPDAGKT, DTPGH, and NKLD.

It belongs to the TRAFAC class translation factor GTPase superfamily. Classic translation factor GTPase family. PrfC subfamily.

The protein localises to the cytoplasm. Functionally, increases the formation of ribosomal termination complexes and stimulates activities of RF-1 and RF-2. It binds guanine nucleotides and has strong preference for UGA stop codons. It may interact directly with the ribosome. The stimulation of RF-1 and RF-2 is significantly reduced by GTP and GDP, but not by GMP. The chain is Peptide chain release factor 3 from Syntrophotalea carbinolica (strain DSM 2380 / NBRC 103641 / GraBd1) (Pelobacter carbinolicus).